Reading from the N-terminus, the 381-residue chain is Erythronate-4-phosphate dehydrogenase (381 aa).

Substrate-binding residues include Ser-45 and Thr-67. Residues Asp-148, 207-209 (ASR), and Asp-233 each bind NAD(+). Residue Arg-209 is part of the active site. Residue Glu-238 is part of the active site. Residue His-255 is the Proton donor of the active site. NAD(+) is bound at residue Gly-258.

It belongs to the D-isomer specific 2-hydroxyacid dehydrogenase family. PdxB subfamily. In terms of assembly, homodimer.

It localises to the cytoplasm. It carries out the reaction 4-phospho-D-erythronate + NAD(+) = (R)-3-hydroxy-2-oxo-4-phosphooxybutanoate + NADH + H(+). Its pathway is cofactor biosynthesis; pyridoxine 5'-phosphate biosynthesis; pyridoxine 5'-phosphate from D-erythrose 4-phosphate: step 2/5. Functionally, catalyzes the oxidation of erythronate-4-phosphate to 3-hydroxy-2-oxo-4-phosphonooxybutanoate. In Idiomarina loihiensis (strain ATCC BAA-735 / DSM 15497 / L2-TR), this protein is Erythronate-4-phosphate dehydrogenase.